A 124-amino-acid polypeptide reads, in one-letter code: MPTINQLIKKPRKSQKEKTASPALQNCPQRRGICTRVMTVTPKKPNSALRKVARVRLSNGFEVTAYIPGIGHNLQEHSVVLIRGGRVKDLPGVRYHIIRGAKDTLGVNNRKQGRSKYGTKKPKA.

The disordered stretch occupies residues 1 to 24; it reads MPTINQLIKKPRKSQKEKTASPAL. At Asp-89 the chain carries 3-methylthioaspartic acid.

It belongs to the universal ribosomal protein uS12 family. Part of the 30S ribosomal subunit. Contacts proteins S8 and S17. May interact with IF1 in the 30S initiation complex.

Functionally, with S4 and S5 plays an important role in translational accuracy. Interacts with and stabilizes bases of the 16S rRNA that are involved in tRNA selection in the A site and with the mRNA backbone. Located at the interface of the 30S and 50S subunits, it traverses the body of the 30S subunit contacting proteins on the other side and probably holding the rRNA structure together. The combined cluster of proteins S8, S12 and S17 appears to hold together the shoulder and platform of the 30S subunit. The chain is Small ribosomal subunit protein uS12 from Borrelia hermsii (strain HS1 / DAH).